Consider the following 705-residue polypeptide: Phosphatidylinositol 4-phosphate 5-kinase 3 (705 aa).

MORN repeat units follow at residues 58 to 80 (YNGGLSAGVPHGTGKYLWSDGCM), 81 to 103 (YEGEWTRGKASGKGRFSWPSGAT), 104 to 126 (YEGQFKDGRMDGEGTFIGIDGDT), 127 to 149 (YRGHWLWGRKHGYGEKRYANGDG), 150 to 172 (YQGNWKANLQDGNGRYVWSDGNE), 173 to 195 (YVGEWKNGVISGKGKMTWANGNR), and 196 to 218 (YDGLWENGAPVGKGVLSWGEEKT). One can recognise a PIPK domain in the interval 321-701 (TVTAGHKNYD…RFRDFINKIF (381 aa)). Residues 661–682 (YDITKKLEHAYKSLHADPASIS) form an activation loop region.

It is found in the cell membrane. The catalysed reaction is a 1,2-diacyl-sn-glycero-3-phospho-(1D-myo-inositol 4-phosphate) + ATP = a 1,2-diacyl-sn-glycero-3-phospho-(1D-myo-inositol-4,5-bisphosphate) + ADP + H(+). With DRP1A and DRP2B, required for the precise coordination of polar ARAC3/ROP6 and ARAC4/ROP2 placement and subsequent root hair positioning during planar polarity formation in root hair-forming cells, probably by mediating the correct basal-to-planar polarity switching of D6PK into the polar, lipid-enriched domain. The chain is Phosphatidylinositol 4-phosphate 5-kinase 3 from Arabidopsis thaliana (Mouse-ear cress).